The sequence spans 443 residues: Chromosomal replication initiator protein DnaA (443 aa).

Residues 1-75 are domain I, interacts with DnaA modulators; that stretch reads MNTQLNEIWQ…AIKQVTFKEY (75 aa). Residues 75–105 are domain II; the sequence is YEIAFIVPSQENLNKLTKQTESAGNEDSPLS. The segment at 106–321 is domain III, AAA+ region; sequence VLNPKYTFDT…GALNRVIAYS (216 aa). Residues G150, G152, K153, and T154 each coordinate ATP. The domain IV, binds dsDNA stretch occupies residues 322-443; sequence SLTENEITVE…SEIKRNLLGK (122 aa).

It belongs to the DnaA family. As to quaternary structure, oligomerizes as a right-handed, spiral filament on DNA at oriC.

It localises to the cytoplasm. Plays an essential role in the initiation and regulation of chromosomal replication. ATP-DnaA binds to the origin of replication (oriC) to initiate formation of the DNA replication initiation complex once per cell cycle. Binds the DnaA box (a 9 base pair repeat at the origin) and separates the double-stranded (ds)DNA. Forms a right-handed helical filament on oriC DNA; dsDNA binds to the exterior of the filament while single-stranded (ss)DNA is stabiized in the filament's interior. The ATP-DnaA-oriC complex binds and stabilizes one strand of the AT-rich DNA unwinding element (DUE), permitting loading of DNA polymerase. After initiation quickly degrades to an ADP-DnaA complex that is not apt for DNA replication. Binds acidic phospholipids. The polypeptide is Chromosomal replication initiator protein DnaA (Acetivibrio thermocellus (strain ATCC 27405 / DSM 1237 / JCM 9322 / NBRC 103400 / NCIMB 10682 / NRRL B-4536 / VPI 7372) (Clostridium thermocellum)).